The primary structure comprises 330 residues: GTP 3',8-cyclase (330 aa).

The region spanning 14–225 is the Radical SAM core domain; it reads RFGRTVDYVR…RERLADAYPE (212 aa). Arg23 contributes to the GTP binding site. 2 residues coordinate [4Fe-4S] cluster: Cys30 and Cys34. Tyr36 serves as a coordination point for S-adenosyl-L-methionine. Cys37 serves as a coordination point for [4Fe-4S] cluster. Arg70 is a GTP binding site. Gly74 serves as a coordination point for S-adenosyl-L-methionine. Residue Thr101 participates in GTP binding. Ser125 lines the S-adenosyl-L-methionine pocket. Lys162 contributes to the GTP binding site. Positions 259 and 262 each coordinate [4Fe-4S] cluster. Residue 264 to 266 coordinates GTP; the sequence is KLR. A [4Fe-4S] cluster-binding site is contributed by Cys276. A compositionally biased stretch (basic and acidic residues) spans 309 to 318; sequence KPKDGLKSSH. A disordered region spans residues 309–330; that stretch reads KPKDGLKSSHDTAASSMSQIGG. Residues 319–330 are compositionally biased toward polar residues; that stretch reads DTAASSMSQIGG.

This sequence belongs to the radical SAM superfamily. MoaA family. In terms of assembly, monomer and homodimer. Requires [4Fe-4S] cluster as cofactor.

It carries out the reaction GTP + AH2 + S-adenosyl-L-methionine = (8S)-3',8-cyclo-7,8-dihydroguanosine 5'-triphosphate + 5'-deoxyadenosine + L-methionine + A + H(+). Its pathway is cofactor biosynthesis; molybdopterin biosynthesis. In terms of biological role, catalyzes the cyclization of GTP to (8S)-3',8-cyclo-7,8-dihydroguanosine 5'-triphosphate. This is GTP 3',8-cyclase from Chlorobaculum tepidum (strain ATCC 49652 / DSM 12025 / NBRC 103806 / TLS) (Chlorobium tepidum).